The primary structure comprises 953 residues: Dual serine/threonine and tyrosine protein kinase (953 aa).

The region spanning 665–926 (PKLEREIGRG…VQSKLQDIYT (262 aa)) is the Protein kinase domain. ATP is bound by residues 671 to 679 (IGRGQYGVV) and Lys694. The Proton acceptor role is filled by Asp791. The disordered stretch occupies residues 932–953 (REAEGGGGGGAKEQQNLKSDTL).

The protein belongs to the protein kinase superfamily. Ser/Thr protein kinase family.

The protein resides in the cytoplasm. Its subcellular location is the cell membrane. It localises to the apical cell membrane. It is found in the basolateral cell membrane. The protein localises to the cell junction. The enzyme catalyses L-seryl-[protein] + ATP = O-phospho-L-seryl-[protein] + ADP + H(+). It carries out the reaction L-threonyl-[protein] + ATP = O-phospho-L-threonyl-[protein] + ADP + H(+). It catalyses the reaction L-tyrosyl-[protein] + ATP = O-phospho-L-tyrosyl-[protein] + ADP + H(+). May act as a positive regulator of ERK phosphorylation downstream of fibroblast growth factor-receptor activation. May induce both caspase-dependent apoptosis and caspase-independent cell death. May play a role in the embryonic development. The sequence is that of Dual serine/threonine and tyrosine protein kinase from Strongylocentrotus purpuratus (Purple sea urchin).